Here is a 99-residue protein sequence, read N- to C-terminus: Apolipoprotein C-III (99 aa).

Positions 1–20 are cleaved as a signal peptide; that stretch reads MQPRTLLTVALLALLASARA. At M63 the chain carries Methionine sulfoxide. Residues 68-99 form a lipid-binding region; it reads RFLKGYWSKFTDKFTGFWDSNPEDQPTPAIES. O-linked (GalNAc...) threonine glycosylation is present at T94.

This sequence belongs to the apolipoprotein C3 family. Post-translationally, the most abundant glycoforms are characterized by an O-linked disaccharide galactose linked to N-acetylgalactosamine (Gal-GalNAc), further modified with up to 3 sialic acid residues. Less abundant glycoforms are characterized by more complex and fucosylated glycan moieties. O-glycosylated on Thr-94 with a core 1 or possibly core 8 glycan.

It localises to the secreted. Its function is as follows. Component of triglyceride-rich very low density lipoproteins (VLDL) and high density lipoproteins (HDL) in plasma. Plays a multifaceted role in triglyceride homeostasis. Intracellularly, promotes hepatic very low density lipoprotein 1 (VLDL1) assembly and secretion; extracellularly, attenuates hydrolysis and clearance of triglyceride-rich lipoproteins (TRLs). Impairs the lipolysis of TRLs by inhibiting lipoprotein lipase and the hepatic uptake of TRLs by remnant receptors. Formed of several curved helices connected via semiflexible hinges, so that it can wrap tightly around the curved micelle surface and easily adapt to the different diameters of its natural binding partners. In Mus musculus (Mouse), this protein is Apolipoprotein C-III (Apoc3).